A 313-amino-acid chain; its full sequence is Aspartate carbamoyltransferase catalytic subunit (313 aa).

Carbamoyl phosphate-binding residues include Arg58 and Thr59. Lys86 is an L-aspartate binding site. Residues Arg108, His136, and Gln139 each coordinate carbamoyl phosphate. 2 residues coordinate L-aspartate: Arg169 and Arg223. 2 residues coordinate carbamoyl phosphate: Gly265 and Pro266.

Belongs to the aspartate/ornithine carbamoyltransferase superfamily. ATCase family. Heterododecamer (2C3:3R2) of six catalytic PyrB chains organized as two trimers (C3), and six regulatory PyrI chains organized as three dimers (R2).

The enzyme catalyses carbamoyl phosphate + L-aspartate = N-carbamoyl-L-aspartate + phosphate + H(+). Its pathway is pyrimidine metabolism; UMP biosynthesis via de novo pathway; (S)-dihydroorotate from bicarbonate: step 2/3. Its function is as follows. Catalyzes the condensation of carbamoyl phosphate and aspartate to form carbamoyl aspartate and inorganic phosphate, the committed step in the de novo pyrimidine nucleotide biosynthesis pathway. This Anaeromyxobacter dehalogenans (strain 2CP-1 / ATCC BAA-258) protein is Aspartate carbamoyltransferase catalytic subunit.